A 106-amino-acid chain; its full sequence is MTLDKTNRMNYLIDFYQELLTPKQRNYMSLYYLDDFSLGEIADEFEVSRQAVYDNIKRTEAMLEQYEERLGLFAKYEQRKLLLDQLKQLDLPSEAHVTIAALEQLE.

It belongs to the UPF0122 family.

In terms of biological role, might take part in the signal recognition particle (SRP) pathway. This is inferred from the conservation of its genetic proximity to ftsY/ffh. May be a regulatory protein. The sequence is that of UPF0122 protein Exig_1902 from Exiguobacterium sibiricum (strain DSM 17290 / CCUG 55495 / CIP 109462 / JCM 13490 / 255-15).